A 453-amino-acid chain; its full sequence is Putative ABC transporter ATP-binding protein MM_0462 (453 aa).

Residues 4–239 (LETRSLKYSY…QELLKKVGLR (236 aa)) enclose the ABC transporter domain. 37 to 44 (GQNGSGKS) is an ATP binding site.

It belongs to the ABC transporter superfamily.

It localises to the cell membrane. Its function is as follows. Probably part of an ABC transporter complex. Responsible for energy coupling to the transport system. This Methanosarcina mazei (strain ATCC BAA-159 / DSM 3647 / Goe1 / Go1 / JCM 11833 / OCM 88) (Methanosarcina frisia) protein is Putative ABC transporter ATP-binding protein MM_0462.